A 667-amino-acid chain; its full sequence is Smc-like protein Sph2 (667 aa).

2 coiled-coil regions span residues Gly153–Thr295 and Gly355–Ala517.

Belongs to the Sph1/Sph2 family.

The protein localises to the cytoplasm. Functionally, may play a role in replication. This is Smc-like protein Sph2 (sph2) from Halobacterium salinarum (strain ATCC 29341 / DSM 671 / R1).